A 204-amino-acid chain; its full sequence is Recombination protein RecR (204 aa).

Residues 63-78 (CRICCNVADSELCPIC) form a C4-type zinc finger. The 96-residue stretch at 86–181 (NKICVVEQPQ…KVTRLARGLP (96 aa)) folds into the Toprim domain.

This sequence belongs to the RecR family.

May play a role in DNA repair. It seems to be involved in an RecBC-independent recombinational process of DNA repair. It may act with RecF and RecO. This chain is Recombination protein RecR, found in Dehalococcoides mccartyi (strain ATCC BAA-2100 / JCM 16839 / KCTC 5957 / BAV1).